We begin with the raw amino-acid sequence, 603 residues long: Elongation factor 4 (603 aa).

Residues 6 to 188 (SKIRNFCIIA…QIVKKIPAPT (183 aa)) enclose the tr-type G domain. GTP contacts are provided by residues 18–23 (DHGKST) and 135–138 (NKVD).

This sequence belongs to the TRAFAC class translation factor GTPase superfamily. Classic translation factor GTPase family. LepA subfamily.

It localises to the cell membrane. The catalysed reaction is GTP + H2O = GDP + phosphate + H(+). Functionally, required for accurate and efficient protein synthesis under certain stress conditions. May act as a fidelity factor of the translation reaction, by catalyzing a one-codon backward translocation of tRNAs on improperly translocated ribosomes. Back-translocation proceeds from a post-translocation (POST) complex to a pre-translocation (PRE) complex, thus giving elongation factor G a second chance to translocate the tRNAs correctly. Binds to ribosomes in a GTP-dependent manner. The polypeptide is Elongation factor 4 (Agathobacter rectalis (strain ATCC 33656 / DSM 3377 / JCM 17463 / KCTC 5835 / VPI 0990) (Eubacterium rectale)).